Consider the following 610-residue polypeptide: Glutamine--fructose-6-phosphate aminotransferase [isomerizing] (610 aa).

The Nucleophile; for GATase activity role is filled by C2. The Glutamine amidotransferase type-2 domain maps to 2-221 (CGIVGAVAQR…DGDVVDLQLA (220 aa)). SIS domains lie at 286–426 (AYKV…TRGR) and 459–600 (WADR…VDKP). The active-site For Fru-6P isomerization activity is the K605.

Homodimer.

It is found in the cytoplasm. The enzyme catalyses D-fructose 6-phosphate + L-glutamine = D-glucosamine 6-phosphate + L-glutamate. Functionally, catalyzes the first step in hexosamine metabolism, converting fructose-6P into glucosamine-6P using glutamine as a nitrogen source. The chain is Glutamine--fructose-6-phosphate aminotransferase [isomerizing] from Bordetella pertussis (strain Tohama I / ATCC BAA-589 / NCTC 13251).